Reading from the N-terminus, the 346-residue chain is MIKVGIVGGTGYTGVELLRILASHPQAEVTVITSRAEAGRQVSELFPNLRGHYDLAFSEPSKEVLLECDVIFFATPHGVAQAMMAELIEGGARVIDLSADFRIRDIATWEKWYGQKHGCPDLVASAVYGLPEVNREKIKSAQLIACPGCYPTSIQLGFLPLLEKGLIDVSSLIANSASGTTGAGKQASVPNLFSEASDSFKAYGAAGHRHLPEIEQGLVDIGGEHANGLSLTFVPHLLPTIRGIHSTLYAKLKGDAGDLQALYEQRYANEPFVDVLPKGDFPQTRTVKSTNMCRISVIEPQERGTVVIMSVIDNLTKGASGQGVQNMNIMFGLDENMGMSSPAILP.

Cys-149 is an active-site residue.

Belongs to the NAGSA dehydrogenase family. Type 1 subfamily.

It localises to the cytoplasm. It carries out the reaction N-acetyl-L-glutamate 5-semialdehyde + phosphate + NADP(+) = N-acetyl-L-glutamyl 5-phosphate + NADPH + H(+). Its pathway is amino-acid biosynthesis; L-arginine biosynthesis; N(2)-acetyl-L-ornithine from L-glutamate: step 3/4. Functionally, catalyzes the NADPH-dependent reduction of N-acetyl-5-glutamyl phosphate to yield N-acetyl-L-glutamate 5-semialdehyde. The protein is N-acetyl-gamma-glutamyl-phosphate reductase of Saccharophagus degradans (strain 2-40 / ATCC 43961 / DSM 17024).